We begin with the raw amino-acid sequence, 411 residues long: Flagellum-associated coiled-coil domain-containing protein 1 (411 aa).

The disordered stretch occupies residues 52-77; the sequence is SQPAKSTAFPRDKAQSRKLEESNKAP. Basic and acidic residues predominate over residues 61-74; sequence PRDKAQSRKLEESN. 2 coiled-coil regions span residues 124–220 and 278–328; these read SDII…LKNM and NESF…VVLE. Lys-353 bears the N6-acetyllysine mark. A coiled-coil region spans residues 355–385; that stretch reads FQTKLAEAEEKYKSTIQVLTEENNSLRQKVL.

The protein localises to the cytoplasm. The protein resides in the cytoplasmic granule. It localises to the cell projection. It is found in the cilium. Its subcellular location is the flagellum. This Rattus norvegicus (Rat) protein is Flagellum-associated coiled-coil domain-containing protein 1.